The chain runs to 566 residues: MNISSQNVLLPSPIPSSSPMASHKKSWLSKHPNQSMTFEKPQLGQFVLTPEPSSNTFYAPSSPASAVRREPLSPMSFVRMRSHRVNKIGRSSQQCDHVLSTVDKAISRVHAIVTCTQDRMIIECVGWNGMIVSDKMRKSVFHMKKNDRIVLVRPNSDACPVLDVFGYRVLLGWPSDSEDEWEGNLNAKNYEENREPMSPSPQEALPLMPSSPPSQDYQNDQNHLILYTNSESIPKLNLRSNELVYPPPSKDLLQKLLALEKDGQVEKSDCSKNTQLKPSFLPKNTDDLLNGTDDNNIVLREVKVSFENEKIESDDLDKNEEISEGEEYTPIEESKEPITVRRDSVIQIDESSAGLTDVISELNFTNHNDDSKNSNITTSNDSPVNEVEPMAPELSSAVVEKKEPEDYESISAVDENTNDSNESLPSSHDYSESTKENSAPDSLLLGLVLDELVFSTTSTTPLPALSHLFPSNMPLQLIQDKLRDLAAKHPYFEEVKRYGTDANGDPLWSEWFYNPDVDDDLERRMRYAPLMRPVRSSRRVHKQYYWKKPRARPRSSGHSSRRRRLS.

The tract at residues M1–P32 is disordered. Position 73 is a phosphoserine (S73). Residues N86–R137 enclose the FHA domain. 4 disordered regions span residues E191 to Y217, D269 to G291, E312 to S334, and F364 to N437. Residues D314–P330 are compositionally biased toward acidic residues. Composition is skewed to polar residues over residues N373–P383 and D414–H428. S379 and S382 each carry phosphoserine.

This sequence belongs to the PLM2/TOS4 family.

The protein localises to the nucleus. Functionally, probable transcriptional regulatory protein Required for G1/S progression. This Schizosaccharomyces pombe (strain 972 / ATCC 24843) (Fission yeast) protein is Transcription factor P14E8.02.